Consider the following 405-residue polypeptide: Intraflagellar transport protein 57 homolog (405 aa).

A coiled-coil region spans residues Glu-252–Leu-380.

The protein belongs to the IFT57 family.

The protein localises to the cytoplasm. It localises to the cytoskeleton. Its subcellular location is the cilium basal body. Required for the formation of cilia. This Drosophila melanogaster (Fruit fly) protein is Intraflagellar transport protein 57 homolog.